A 1033-amino-acid chain; its full sequence is Kinesin-like protein KIN-4A (1033 aa).

The Kinesin motor domain occupies 11-366 (CVKVAVHVRP…LKYANRARNI (356 aa)). 89 to 96 (GQTGSGKT) is an ATP binding site. A disordered region spans residues 443-462 (QDGSPCSVESDGLKRNLRSR). Basic and acidic residues predominate over residues 453–462 (DGLKRNLRSR). A coiled-coil region spans residues 525–638 (ALKQHFGKKI…IKQEAEQFRQ (114 aa)). Residues 763–785 (DELDSKGPSPSRGKNGCARGSSL) are disordered. Residues 863-895 (IEIREMKEQLKELVGLLRQSELQRKEVENELKL) adopt a coiled-coil conformation.

This sequence belongs to the TRAFAC class myosin-kinesin ATPase superfamily. Kinesin family. KIN-4 subfamily. Homodimer. In terms of tissue distribution, expressed in cotton fibers.

The protein localises to the cytoplasm. Functionally, kinesin-like motor protein involved in the control of the oriented deposition of cellulose microfibrils. This Gossypium hirsutum (Upland cotton) protein is Kinesin-like protein KIN-4A.